A 322-amino-acid chain; its full sequence is HPr kinase/phosphorylase (322 aa).

Active-site residues include His146 and Lys167. 161 to 168 (GDSGLGKS) lines the ATP pocket. Residue Ser168 participates in Mg(2+) binding. The active-site Proton acceptor; for phosphorylation activity. Proton donor; for dephosphorylation activity is Asp185. The important for the catalytic mechanism of both phosphorylation and dephosphorylation stretch occupies residues 209–218 (LEVRGLGLLD). Glu210 contributes to the Mg(2+) binding site. The active site involves Arg250. The segment at 271-276 (QVAAGR) is important for the catalytic mechanism of dephosphorylation.

This sequence belongs to the HPrK/P family. In terms of assembly, homohexamer. It depends on Mg(2+) as a cofactor.

It catalyses the reaction [HPr protein]-L-serine + ATP = [HPr protein]-O-phospho-L-serine + ADP + H(+). The enzyme catalyses [HPr protein]-O-phospho-L-serine + phosphate + H(+) = [HPr protein]-L-serine + diphosphate. Catalyzes the ATP- as well as the pyrophosphate-dependent phosphorylation of a specific serine residue in HPr, a phosphocarrier protein of the phosphoenolpyruvate-dependent sugar phosphotransferase system (PTS). HprK/P also catalyzes the pyrophosphate-producing, inorganic phosphate-dependent dephosphorylation (phosphorolysis) of seryl-phosphorylated HPr (P-Ser-HPr). This chain is HPr kinase/phosphorylase, found in Burkholderia mallei (strain NCTC 10247).